The sequence spans 406 residues: tRNA-specific 2-thiouridylase MnmA (406 aa).

ATP is bound by residues 42-49 (GLSGGVDS) and Leu-68. Cys-129 serves as the catalytic Nucleophile. A disulfide bond links Cys-129 and Cys-237. Gly-154 is an ATP binding site. The tract at residues 187 to 189 (KDQ) is interaction with tRNA. Catalysis depends on Cys-237, which acts as the Cysteine persulfide intermediate. Residues 342 to 343 (RY) are interaction with tRNA.

The protein belongs to the MnmA/TRMU family.

The protein localises to the cytoplasm. The enzyme catalyses S-sulfanyl-L-cysteinyl-[protein] + uridine(34) in tRNA + AH2 + ATP = 2-thiouridine(34) in tRNA + L-cysteinyl-[protein] + A + AMP + diphosphate + H(+). In terms of biological role, catalyzes the 2-thiolation of uridine at the wobble position (U34) of tRNA, leading to the formation of s(2)U34. In Prochlorococcus marinus (strain MIT 9211), this protein is tRNA-specific 2-thiouridylase MnmA.